The sequence spans 293 residues: 4-hydroxy-tetrahydrodipicolinate synthase (293 aa).

Pyruvate is bound at residue Ser-45. Residue Tyr-133 is the Proton donor/acceptor of the active site. The active-site Schiff-base intermediate with substrate is the Lys-161. Ile-203 contributes to the pyruvate binding site.

The protein belongs to the DapA family. As to quaternary structure, homotetramer; dimer of dimers.

Its subcellular location is the cytoplasm. It carries out the reaction L-aspartate 4-semialdehyde + pyruvate = (2S,4S)-4-hydroxy-2,3,4,5-tetrahydrodipicolinate + H2O + H(+). The protein operates within amino-acid biosynthesis; L-lysine biosynthesis via DAP pathway; (S)-tetrahydrodipicolinate from L-aspartate: step 3/4. Its function is as follows. Catalyzes the condensation of (S)-aspartate-beta-semialdehyde [(S)-ASA] and pyruvate to 4-hydroxy-tetrahydrodipicolinate (HTPA). The sequence is that of 4-hydroxy-tetrahydrodipicolinate synthase from Psychromonas ingrahamii (strain DSM 17664 / CCUG 51855 / 37).